We begin with the raw amino-acid sequence, 333 residues long: tRNA N6-adenosine threonylcarbamoyltransferase (333 aa).

Positions 111 and 115 each coordinate Fe cation. Residues Leu134 to Gly138, Asp167, Gly180, and Asn272 contribute to the substrate site. Asp300 contacts Fe cation.

The protein belongs to the KAE1 / TsaD family. Fe(2+) is required as a cofactor.

Its subcellular location is the cytoplasm. It catalyses the reaction L-threonylcarbamoyladenylate + adenosine(37) in tRNA = N(6)-L-threonylcarbamoyladenosine(37) in tRNA + AMP + H(+). Required for the formation of a threonylcarbamoyl group on adenosine at position 37 (t(6)A37) in tRNAs that read codons beginning with adenine. Is involved in the transfer of the threonylcarbamoyl moiety of threonylcarbamoyl-AMP (TC-AMP) to the N6 group of A37, together with TsaE and TsaB. TsaD likely plays a direct catalytic role in this reaction. This is tRNA N6-adenosine threonylcarbamoyltransferase from Legionella pneumophila (strain Lens).